The chain runs to 495 residues: 3-octaprenyl-4-hydroxybenzoate carboxy-lyase (495 aa).

Residue asparagine 172 coordinates Mn(2+). Residues 175 to 177 (IYR), 189 to 191 (RWL), and 194 to 195 (RG) contribute to the prenylated FMN site. Glutamate 238 lines the Mn(2+) pocket. Aspartate 287 serves as the catalytic Proton donor.

It belongs to the UbiD family. Homohexamer. The cofactor is prenylated FMN. Mn(2+) serves as cofactor.

The protein resides in the cell membrane. The catalysed reaction is a 4-hydroxy-3-(all-trans-polyprenyl)benzoate + H(+) = a 2-(all-trans-polyprenyl)phenol + CO2. It functions in the pathway cofactor biosynthesis; ubiquinone biosynthesis. Its function is as follows. Catalyzes the decarboxylation of 3-octaprenyl-4-hydroxy benzoate to 2-octaprenylphenol, an intermediate step in ubiquinone biosynthesis. The chain is 3-octaprenyl-4-hydroxybenzoate carboxy-lyase from Yersinia enterocolitica serotype O:8 / biotype 1B (strain NCTC 13174 / 8081).